The sequence spans 21 residues: GLLASLGKVLGGYLAEKLKPK.

As to expression, expressed by the skin dorsal glands.

It localises to the secreted. Has no antimicrobial activity. Strongly inhibits the formation of NO by neuronal nitric oxide synthase at micromolar concentrations. The chain is Dahlein-5.5 from Ranoidea dahlii (Dahl's aquatic frog).